The following is a 323-amino-acid chain: MRKYFKERDVPFIIFLMGPTASGKTSVVIELKKQKLGIKIISVDSALVYKNMNIGTAKPSVDELEIAPHQLIDIRDPADCYSVSDFYHDAILEINKIIRSGYVPVLVGGTMLYFKTLLTGLYQLPGKSQNIRNDLIYEAQKIGWVNMYNKLKCIDPIVSKTIHCNDHKRIIRALEVFLSSGKTLTELKQKFLNQQSQRYKVLQFALMPSKREFLYNRIEQRFYKMLKSGFEDEVRLLFSRPDLHDGYQSSISCVGYRQMWEYLSGNVEYDQMIYKGIYATRRLVKNQLTWLKKWPNVHWLNGDNVLIAVNDMLSVLSKYSCVI.

18 to 25 contacts ATP; sequence GPTASGKT. 20–25 serves as a coordination point for substrate; it reads TASGKT. The tract at residues 44–47 is interaction with substrate tRNA; it reads DSAL.

It belongs to the IPP transferase family. As to quaternary structure, monomer. Mg(2+) serves as cofactor.

It carries out the reaction adenosine(37) in tRNA + dimethylallyl diphosphate = N(6)-dimethylallyladenosine(37) in tRNA + diphosphate. Catalyzes the transfer of a dimethylallyl group onto the adenine at position 37 in tRNAs that read codons beginning with uridine, leading to the formation of N6-(dimethylallyl)adenosine (i(6)A). The protein is tRNA dimethylallyltransferase of Blochmanniella floridana.